Consider the following 312-residue polypeptide: Pantothenate kinase (312 aa).

Position 97–104 (97–104) interacts with ATP; sequence GSVAVGKS.

The protein belongs to the prokaryotic pantothenate kinase family.

It localises to the cytoplasm. The enzyme catalyses (R)-pantothenate + ATP = (R)-4'-phosphopantothenate + ADP + H(+). Its pathway is cofactor biosynthesis; coenzyme A biosynthesis; CoA from (R)-pantothenate: step 1/5. The polypeptide is Pantothenate kinase (Mycolicibacterium vanbaalenii (strain DSM 7251 / JCM 13017 / BCRC 16820 / KCTC 9966 / NRRL B-24157 / PYR-1) (Mycobacterium vanbaalenii)).